Reading from the N-terminus, the 381-residue chain is MANQWQAQAEQTITYEVQMTDGVLDPSNRALLDAGATVRTDQPRRFIVIDANVHEIYGDALRKYLAHHNCEYRLCVLSASEEAKTMESVFTVVDGLDSFGISRRHEPIIAIGGGIVLDIAGLAASMYRRSTPYVRVPTSLIGLVDAGVGIKTGVNFGSHKNRLGTYFAPTAALLDRGFLDTVDDRHISNGLAEILKIALVKDAELFRLMEEHAELLLAERLTGRTPTGDVVAREVFSRAVGGMLEELEPNLWEQELERLVDYGHSFSPTLEMRALPALLHGEAVTVDMALTTVLAEARGLVSTSDRERIFQVMRRLRLPVWHPLLEAGLLEHALRETTRHRDGLQRMPIPVGIGGARFLHDLTVAELTGAAESLRELGGGE.

NAD(+) contacts are provided by residues D50, 81–84 (EEAK), 114–118 (GIVLD), 138–139 (TS), K151, K160, and 178–181 (FLDT). K151 is an active-site residue. Residues E193, H264, and H280 each coordinate a divalent metal cation.

This sequence belongs to the sugar phosphate cyclases superfamily. EEVS family. Requires NAD(+) as cofactor. Co(2+) serves as cofactor.

It catalyses the reaction D-sedoheptulose 7-phosphate = 2-epi-5-epi-valiolone + phosphate. The protein operates within antibiotic biosynthesis. Its function is as follows. Catalyzes the cyclization of D-sedoheptulose 7-phosphate to 2-epi-5-epi-valiolone. Involved in cetoniacytone A biosynthesis. This chain is 2-epi-5-epi-valiolone synthase, found in Actinomyces sp.